The primary structure comprises 154 residues: CASP-like protein 5C2 (154 aa).

Topologically, residues 1 to 17 (MEHVPGSFGTSASFALR) are cytoplasmic. A helical membrane pass occupies residues 18-38 (FGQTIFSAASLIFMCFDFDFY). The Extracellular portion of the chain corresponds to 39-41 (DFT). Residues 42-62 (TFCYLAMVMAIVTPWSILLAL) traverse the membrane as a helical segment. Residues 63 to 81 (TDTYSVLVKLLPQELRVLS) lie on the Cytoplasmic side of the membrane. A helical transmembrane segment spans residues 82-102 (IVFAGDFVLSFLSLGGACAVA). Residues 103 to 128 (SATELLASADGKICDGSLCIQYQVSA) lie on the Extracellular side of the membrane. The helical transmembrane segment at 129–149 (ALAFLCWFLLLASALFNFWSL) threads the bilayer. Residues 150–154 (PSLYY) are Cytoplasmic-facing.

This sequence belongs to the Casparian strip membrane proteins (CASP) family. In terms of assembly, homodimer and heterodimers.

It is found in the cell membrane. In Arabidopsis thaliana (Mouse-ear cress), this protein is CASP-like protein 5C2.